A 356-amino-acid chain; its full sequence is L-amino acid-D/L-Glu epimerase (356 aa).

Substrate is bound by residues Arg25, Ser136, and 161–163; that span reads KVK. Asp191 serves as a coordination point for Mg(2+). Asn193 is a substrate binding site. The Mg(2+) site is built by Glu219 and Asp244. Residues Lys268, 296-298, and 320-322 contribute to the substrate site; these read CMM and DLD.

The protein belongs to the mandelate racemase/muconate lactonizing enzyme family. Requires Mg(2+) as cofactor.

Functionally, catalyzes the epimerization of dipeptides with L-Glu in the second position. Has epimerase activity with L-Ala-L-Glu, L-Pro-L-Glu, L-Val-L-Glu, L-Thr-L-Glu and L-Met-L-Glu (in vitro). This chain is L-amino acid-D/L-Glu epimerase, found in Francisella philomiragia subsp. philomiragia (strain ATCC 25017 / CCUG 19701 / FSC 153 / O#319-036).